Reading from the N-terminus, the 484-residue chain is HSPB1-associated protein 1 (484 aa).

The disordered stretch occupies residues 1–26 (MAARPGAITNADSASGGGEEEGKHVK). Positions 88 to 208 (ETACNYVEAT…EDTPFLYPTR (121 aa)) are interaction with HSPB1. The JmjC domain occupies 124–288 (WAYADYKYFV…HQTRVEEAIT (165 aa)). Residues 396–429 (TPSSEEPSSERGGIFENDGEDFVSKNGKSFGKRQ) are disordered.

Interacts with CRYAB and HSPB1.

The protein resides in the cytoplasm. Its function is as follows. May play a role in cellular stress response. The sequence is that of HSPB1-associated protein 1 (HSPBAP1) from Bos taurus (Bovine).